Here is a 260-residue protein sequence, read N- to C-terminus: Small ribosomal subunit protein eS4 (260 aa).

In terms of domain architecture, S4 RNA-binding spans 46–111 (VPLLILVRDM…RYRVVMNEHH (66 aa)).

This sequence belongs to the eukaryotic ribosomal protein eS4 family.

The polypeptide is Small ribosomal subunit protein eS4 (Methanopyrus kandleri (strain AV19 / DSM 6324 / JCM 9639 / NBRC 100938)).